The chain runs to 622 residues: Chaperone protein HtpG (622 aa).

Positions 1–322 are a; substrate-binding; that stretch reads MTEAKNYEFQ…SEDLPLNISR (322 aa). A b region spans residues 323-539; sequence QSLQDNALVS…DGFMSASMER (217 aa). A c region spans residues 540 to 622; sequence VLAASRKEQG…KILDRAVSRA (83 aa).

This sequence belongs to the heat shock protein 90 family. In terms of assembly, homodimer.

The protein localises to the cytoplasm. Functionally, molecular chaperone. Has ATPase activity. In Desulfotalea psychrophila (strain LSv54 / DSM 12343), this protein is Chaperone protein HtpG.